The sequence spans 71 residues: Large ribosomal subunit protein uL29 (71 aa).

The disordered stretch occupies residues 1–20 (MKARELQELRQGSSPQDLQE).

This sequence belongs to the universal ribosomal protein uL29 family.

This chain is Large ribosomal subunit protein uL29, found in Clostridium kluyveri (strain ATCC 8527 / DSM 555 / NBRC 12016 / NCIMB 10680 / K1).